The sequence spans 501 residues: GTPase Obg (501 aa).

The Obg domain maps to 2-159 (NRFIDRVVLH…HDLILELKSM (158 aa)). An OBG-type G domain is found at 160-341 (ADVGLVGFPS…LKYKLLEIVQ (182 aa)). GTP-binding positions include 166–173 (GFPSAGKS), 191–195 (FTTLQ), 212–215 (DVPG), 292–295 (NKAD), and 322–324 (SAV). Mg(2+) contacts are provided by serine 173 and threonine 193. The region spanning 362 to 442 (VDHRTKGQFQ…IGGISFEWEP (81 aa)) is the OCT domain.

Belongs to the TRAFAC class OBG-HflX-like GTPase superfamily. OBG GTPase family. As to quaternary structure, monomer. Mg(2+) serves as cofactor.

Its subcellular location is the cytoplasm. Its function is as follows. An essential GTPase which binds GTP, GDP and possibly (p)ppGpp with moderate affinity, with high nucleotide exchange rates and a fairly low GTP hydrolysis rate. Plays a role in control of the cell cycle, stress response, ribosome biogenesis and in those bacteria that undergo differentiation, in morphogenesis control. This Corynebacterium glutamicum (strain R) protein is GTPase Obg.